Here is an 835-residue protein sequence, read N- to C-terminus: Adhesion G protein-coupled receptor E5 (835 aa).

The signal sequence occupies residues 1-20 (MGGRVFLAFCVWLTLPGAET). Residues 21–552 (QDSRGCARWC…EDWKLTLITR (532 aa)) are Extracellular-facing. An EGF-like 1 domain is found at 22 to 63 (DSRGCARWCPQNSSCVNATACRCNPGFSSFSEIITTPTETCD). Disulfide bonds link C26–C36, C30–C42, C44–C62, C68–C82, C76–C91, C93–C114, C120–C133, C127–C142, C144–C158, C164–C177, C171–C186, C188–C207, C213–C226, C220–C235, and C237–C256. N-linked (GlcNAc...) asparagine glycans are attached at residues N33 and N38. In terms of domain architecture, EGF-like 2; calcium-binding spans 64-115 (DINECATPSKVSCGKFSDCWNTEGSYDCVCSPGYEPVSGAKTFKNESENTCQ). N-linked (GlcNAc...) asparagine glycosylation is present at N108. Positions 116 to 159 (DVDECQQNPRLCKSYGTCVNTLGSYTCQCLPGFKFIPEDPKVCT) constitute an EGF-like 3; calcium-binding domain. Residues 160–208 (DVNECTSGQNPCHSSTHCLNNVGSYQCRCRPGWQPIPGSPNGPNNTVCE) enclose the EGF-like 4; calcium-binding domain. Residue N203 is glycosylated (N-linked (GlcNAc...) asparagine). The 49-residue stretch at 209–257 (DVDECSSGQHQCDSSTVCFNTVGSYSCRCRPGWKPRHGIPNNQKDTVCE) folds into the EGF-like 5; calcium-binding domain. Positions 349-543 (PFTYISPSNT…AILMAHYDVE (195 aa)) constitute a GAIN-B domain. Residues N371, N406, N413, N453, and N520 are each glycosylated (N-linked (GlcNAc...) asparagine). Disulfide bonds link C495-C525 and C513-C527. The segment at 495-543 (CAFWKSDSDRGGHWATEGCQVLGSKNGSTTCQCSHLSSFAILMAHYDVE) is GPS. Residues 553-572 (VGLALSLFCLLLCILTFLLV) traverse the membrane as a helical segment. At 573–581 (RPIQGSRTT) the chain is on the cytoplasmic side. A helical membrane pass occupies residues 582-601 (IHLHLCICLFVGSTIFLAGI). Over 602-620 (ENEGGQVGLRCRLVAGLLH) the chain is Extracellular. Residues 621-642 (YCFLAAFCWMSLEGLELYFLVV) traverse the membrane as a helical segment. The Cytoplasmic segment spans residues 643-653 (RVFQGQGLSTR). Residues 654–674 (WLCLIGYGVPLLIVGVSAAIY) traverse the membrane as a helical segment. Over 675 to 691 (SKGYGRPRYCWLDFEQG) the chain is Extracellular. A helical transmembrane segment spans residues 692 to 712 (FLWSFLGPVTFIILCNAVIFV). Residues 713–739 (TTVWKLTQKFSEINPDMKKLKKARALT) lie on the Cytoplasmic side of the membrane. Residues 740-760 (ITAIAQLFLLGCTWVFGLFIF) traverse the membrane as a helical segment. The Extracellular portion of the chain corresponds to 761–766 (DDRSLV). A helical transmembrane segment spans residues 767 to 789 (LTYVFTILNCLQGAFLYLLHCLL). The Cytoplasmic portion of the chain corresponds to 790-835 (NKKVREEYRKWACLVAGGSKYSEFTSTTSGTGHNQTRALRASESGI). Polar residues predominate over residues 814 to 826 (TSTTSGTGHNQTR). The disordered stretch occupies residues 814-835 (TSTTSGTGHNQTRALRASESGI). S815 carries the phosphoserine modification. At T816 the chain carries Phosphothreonine. S818 bears the Phosphoserine mark. Position 825 is a phosphothreonine (T825). S831 and S833 each carry phosphoserine.

Belongs to the G-protein coupled receptor 2 family. LN-TM7 subfamily. In terms of assembly, forms a heterodimer, consisting of a large extracellular region (alpha subunit) non-covalently linked to a seven-transmembrane moiety (beta subunit). Interacts with complement decay-accelerating factor (DAF). The largest isoform (isoform 1) interacts with chondroitin sulfate. Post-translationally, proteolytically cleaved into 2 subunits, an extracellular alpha subunit and a seven-transmembrane subunit. As to expression, broadly expressed, found on most hematopoietic cells, including activated lymphocytes, monocytes, macrophages, dendritic cells, and granulocytes. Expressed also abundantly by smooth muscle cells. Expressed in thyroid, colorectal, gastric, esophageal and pancreatic carcinomas too. Expression are increased under inflammatory conditions in the CNS of multiple sclerosis and in synovial tissue of patients with rheumatoid arthritis. Increased expression of CD97 in the synovium is accompanied by detectable levels of soluble CD97 in the synovial fluid.

The protein resides in the cell membrane. Its subcellular location is the secreted. It localises to the extracellular space. Receptor potentially involved in both adhesion and signaling processes early after leukocyte activation. Plays an essential role in leukocyte migration. The sequence is that of Adhesion G protein-coupled receptor E5 from Homo sapiens (Human).